The following is an 869-amino-acid chain: Rho GTPase-activating protein 27 (869 aa).

The 64-residue stretch at 6–69 folds into the SH3 domain; sequence EGDVYVLVEH…PAQYVRELPA (64 aa). Ala28 is subject to Phosphotyrosine. The segment at 104 to 134 is disordered; sequence GADGSSAEPRGRASSLCGPARQRTGGQRNSL. A phosphoserine mark is found at Ser155, Ser215, and Ser249. Disordered stretches follow at residues 208 to 300 and 331 to 401; these read RCPP…SGES and ETEE…GWSC. Residues 209 to 220 are compositionally biased toward basic and acidic residues; the sequence is CPPRAESPKQVD. The segment covering 235–250 has biased composition (low complexity); that stretch reads RATSPRSAAAPPRLSP. The 35-residue stretch at 246-280 folds into the WW 1 domain; it reads PRLSPVWETHTDTGTGRPYYYNPDTGVTTWESPFE. Over residues 283–294 the composition is skewed to polar residues; sequence EGTTSPATSRAS. The 35-residue stretch at 299–333 folds into the WW 2 domain; the sequence is ESLETEWGQYWDEESRRVFFYNPLTGETAWEDETE. Residues 345 to 356 show a composition bias toward polar residues; that stretch reads MQPSLSPRSPGQ. The residue at position 350 (Ser350) is a Phosphoserine. One can recognise a WW 3 domain in the interval 414-447; that stretch reads QFTQEQWVRLEDQHGKPYFYNPEDSSVQWELPQV. 2 disordered regions span residues 449 to 477 and 623 to 642; these read IPAP…KIKT and EEDV…GLES. A phosphoserine mark is found at Ser459 and Ser462. At Thr464 the chain carries Phosphothreonine. The residue at position 469 (Ser469) is a Phosphoserine. A PH domain is found at 477-593; sequence TLDKAGVLHR…WHKAIAEGIS (117 aa). Phosphoserine occurs at positions 632 and 636. A Rho-GAP domain is found at 677 to 866; it reads CALAQLCERE…LILHQCADIF (190 aa).

As to quaternary structure, interacts with SH3KBP1/CIN85. Widely expressed. Highly expressed in kidney, lung, small intestine and thymus.

It localises to the cytoplasm. The protein localises to the membrane. Functionally, rho GTPase-activating protein which may be involved in clathrin-mediated endocytosis. GTPase activators for the Rho-type GTPases act by converting them to an inactive GDP-bound state. Has activity toward CDC42 and RAC1. The chain is Rho GTPase-activating protein 27 (Arhgap27) from Mus musculus (Mouse).